The primary structure comprises 309 residues: Methionyl-tRNA formyltransferase (309 aa).

109-112 (SLLP) contributes to the (6S)-5,6,7,8-tetrahydrofolate binding site.

This sequence belongs to the Fmt family.

The catalysed reaction is L-methionyl-tRNA(fMet) + (6R)-10-formyltetrahydrofolate = N-formyl-L-methionyl-tRNA(fMet) + (6S)-5,6,7,8-tetrahydrofolate + H(+). Its function is as follows. Attaches a formyl group to the free amino group of methionyl-tRNA(fMet). The formyl group appears to play a dual role in the initiator identity of N-formylmethionyl-tRNA by promoting its recognition by IF2 and preventing the misappropriation of this tRNA by the elongation apparatus. The protein is Methionyl-tRNA formyltransferase of Chloroflexus aggregans (strain MD-66 / DSM 9485).